The chain runs to 334 residues: NAD-dependent protein deacetylase sirtuin-3 (334 aa).

The Deacetylase sirtuin-type domain maps to 53-315; it reads SSEKKFSLQD…ERLVDLLGWT (263 aa). Lys57 carries the N6-succinyllysine modification. Residues 80–100 and 163–166 each bind NAD(+); these read GAGI…SGLY and QNID. Residue His183 is the Proton acceptor of the active site. Zn(2+) contacts are provided by Cys191, Cys194, Cys215, and Cys218. NAD(+) is bound by residues 254 to 256 and 279 to 281; these read GTS and NRD.

It belongs to the sirtuin family. Class I subfamily. As to quaternary structure, upon metabolic stress, forms a complex composed of FOXO3, SIRT3 and mitochondrial RNA polymerase POLRMT; the complex is recruited to mtDNA in a SIRT3-dependent manner. Also forms a complex composed of FOXO3, SIRT3, TFAM and POLRMT. Interacts with NDUFA9, ACSS1, IDH2 and GDH. Interacts with PCCA. The cofactor is Zn(2+). In terms of tissue distribution, expressed in cardiomyocytes (at protein level). Expressed in the brain, liver, kidney and testes. Expressed in skeletal muscles (at protein level).

The protein resides in the mitochondrion matrix. It is found in the cytoplasm. It catalyses the reaction N(6)-acetyl-L-lysyl-[protein] + NAD(+) + H2O = 2''-O-acetyl-ADP-D-ribose + nicotinamide + L-lysyl-[protein]. The enzyme catalyses N(6)-[(S)-lactoyl]-L-lysyl-[protein] + NAD(+) + H2O = 2''-O-(S)-lactoyl-ADP-D-ribose + nicotinamide + L-lysyl-[protein]. Functionally, NAD-dependent protein deacetylase. Activates or deactivates mitochondrial target proteins by deacetylating key lysine residues. Known targets include ACSS1, IDH, GDH, PDHA1, SOD2, LCAD, SDHA, MRPL12 and the ATP synthase subunit ATP5PO. Contributes to the regulation of the cellular energy metabolism. Important for regulating tissue-specific ATP levels. In response to metabolic stress, deacetylates transcription factor FOXO3 and recruits FOXO3 and mitochondrial RNA polymerase POLRMT to mtDNA to promote mtDNA transcription. Acts as a regulator of ceramide metabolism by mediating deacetylation of ceramide synthases CERS1, CERS2 and CERS6, thereby increasing their activity and promoting mitochondrial ceramide accumulation. Regulates hepatic lipogenesis. Uses NAD(+) substrate imported by SLC25A47, triggering downstream activation of PRKAA1/AMPK-alpha signaling cascade that ultimately downregulates sterol regulatory element-binding protein (SREBP) transcriptional activities and ATP-consuming lipogenesis to restore cellular energy balance. In addition to protein deacetylase activity, also acts as a protein-lysine deacylase by mediating delactylation of proteins, such as CCNE2 and 'Lys-16' of histone H4 (H4K16la). This is NAD-dependent protein deacetylase sirtuin-3 from Mus musculus (Mouse).